The primary structure comprises 445 residues: tRNA-2-methylthio-N(6)-dimethylallyladenosine synthase (445 aa).

Residues 3-120 (RKLFIQTHGC…LPGLITQAAS (118 aa)) enclose the MTTase N-terminal domain. [4Fe-4S] cluster is bound by residues Cys12, Cys49, Cys83, Cys157, Cys161, and Cys164. Positions 143-375 (SVDGPSAFVS…QQRINQNVQD (233 aa)) constitute a Radical SAM core domain. The 65-residue stretch at 378-442 (RKMVGSTQRI…SNSLLGTDPR (65 aa)) folds into the TRAM domain.

It belongs to the methylthiotransferase family. MiaB subfamily. Monomer. It depends on [4Fe-4S] cluster as a cofactor.

The protein localises to the cytoplasm. It carries out the reaction N(6)-dimethylallyladenosine(37) in tRNA + (sulfur carrier)-SH + AH2 + 2 S-adenosyl-L-methionine = 2-methylsulfanyl-N(6)-dimethylallyladenosine(37) in tRNA + (sulfur carrier)-H + 5'-deoxyadenosine + L-methionine + A + S-adenosyl-L-homocysteine + 2 H(+). Its function is as follows. Catalyzes the methylthiolation of N6-(dimethylallyl)adenosine (i(6)A), leading to the formation of 2-methylthio-N6-(dimethylallyl)adenosine (ms(2)i(6)A) at position 37 in tRNAs that read codons beginning with uridine. This chain is tRNA-2-methylthio-N(6)-dimethylallyladenosine synthase, found in Alcanivorax borkumensis (strain ATCC 700651 / DSM 11573 / NCIMB 13689 / SK2).